Consider the following 133-residue polypeptide: Large ribosomal subunit protein uL22 (133 aa).

It belongs to the universal ribosomal protein uL22 family. As to quaternary structure, part of the 50S ribosomal subunit.

This protein binds specifically to 23S rRNA; its binding is stimulated by other ribosomal proteins, e.g. L4, L17, and L20. It is important during the early stages of 50S assembly. It makes multiple contacts with different domains of the 23S rRNA in the assembled 50S subunit and ribosome. Its function is as follows. The globular domain of the protein is located near the polypeptide exit tunnel on the outside of the subunit, while an extended beta-hairpin is found that lines the wall of the exit tunnel in the center of the 70S ribosome. The sequence is that of Large ribosomal subunit protein uL22 from Granulibacter bethesdensis (strain ATCC BAA-1260 / CGDNIH1).